A 247-amino-acid chain; its full sequence is MVDRLANSEANSKRIGVVEACFGTAGQPLAIPGRVLIGEGVLTKLCRKRPKARQFFLFNDILVYGNIVIQKKKYNKQHIIPLESVTIDTVEDEGELRNGWLIKTPTKSFAVYAATATEKSEWMSHINKCVSDLLEKSGKSPTGEHAAVWVPDSEATVCMRCQKMKFTPVNRRHHCRKCGFVVCGPCSEKKFLLPSQSSKPVRVCEFCYKQLSTGATLPPRSDSYSRQGSDFGSNNISDDDDDDDSSD.

The 97-residue stretch at 35-131 folds into the PH domain; sequence VLIGEGVLTK…WMSHINKCVS (97 aa). The FYVE-type zinc-finger motif lies at 152-212; it reads DSEATVCMRC…VCEFCYKQLS (61 aa). Residues Cys158, Cys161, Cys175, Cys178, Cys183, Cys186, Cys204, and Cys207 each coordinate Zn(2+). The interval 213–247 is disordered; the sequence is TGATLPPRSDSYSRQGSDFGSNNISDDDDDDDSSD. The segment covering 222 to 236 has biased composition (polar residues); sequence DSYSRQGSDFGSNNI. Residues 237-247 show a composition bias toward acidic residues; that stretch reads SDDDDDDDSSD.

The protein resides in the early endosome membrane. It localises to the endoplasmic reticulum. Functionally, may play a role in early endosome fusion upstream of RAB5, hence regulating receptor trafficking and fluid-phase transport. Enhances cellular sensitivity to TNF-induced apoptosis. The polypeptide is Pleckstrin homology domain-containing family F member 2 (plekhf2) (Danio rerio (Zebrafish)).